A 204-amino-acid polypeptide reads, in one-letter code: Protein Nef (204 aa).

Residues 1 to 27 form a disordered region; the sequence is MGNKWSKSWPQVRDRMRRAAPAPAADG. A lipid anchor (N-myristoyl glycine; by host) is attached at Gly-2. Position 6 is a phosphoserine; by host (Ser-6). The tract at residues 60 to 63 is acidic; interacts with host PACS1 and PACS2; stabilizes the interaction of NEF/MHC-I with host AP1M1; necessary for MHC-I internalization; that stretch reads TEEE. The interval 67 to 76 is SH3-binding; interaction with Src family tyrosine kinases; it reads PVRPQVPLRP. The PxxP; stabilizes the interaction of NEF/MHC-I with host AP1M1; necessary for MHC-I internalization motif lies at 70–73; sequence PQVP. The tract at residues 106–122 is mediates dimerization, Nef-PTE1 interaction; sequence EILDLWVHNTQGYFPDW. The segment at 146–178 is binding to ATP6V1H; it reads VDPSEVEEANEGENNCLLHPACQHGIEDEEREV. Positions 162-163 match the Dileucine internalization motif; necessary for CD4 internalization motif; the sequence is LL. Positions 172–173 match the Diacidic; necessary for CD4 internalization motif; sequence ED.

The protein belongs to the lentivirus primate group Nef protein family. In terms of assembly, monomer; cytosolic form. Homodimer; membrane bound form. Interacts with Nef associated p21-activated kinase (PAK2); this interaction activates PAK2. Associates with the Nef-MHC-I-AP1 complex; this complex is required for MHC-I internalization. Interacts (via C-terminus) with host PI3-kinase. Interacts with host PACS1; this interaction seems to be weak. Interacts with host PACS2. Interacts with host LCK and MAPK3; these interactions inhibit the kinase activity of the latter. Interacts with host ATP6V1H; this interaction may play a role in CD4 endocytosis. Associates with the CD4-Nef-AP2 complex; this complex is required for CD4 internalization. Interacts with host AP2 subunit alpha and AP2 subunit sigma2. Interacts with TCR-zeta chain; this interaction up-regulates the Fas ligand (FasL) surface expression. Interacts with host HCK, LYN, and SRC; these interactions activate the Src family kinases. Interacts with MAP3K5; this interaction inhibits the Fas and TNFR-mediated death signals. Interacts with beta-COP and PTE1. Interacts with human RACK1; this increases Nef phosphorylation by PKC. Interacts with TP53; this interaction decreases the half-life of TP53, protecting the infected cell against p53-mediated apoptosis. In terms of processing, the virion-associated Nef proteins are cleaved by the viral protease to release the soluble C-terminal core protein. Nef is probably cleaved concomitantly with viral structural proteins on maturation of virus particles. Myristoylated. Post-translationally, phosphorylated on serine residues, probably by host PKCdelta and theta.

The protein resides in the host cell membrane. It is found in the virion. The protein localises to the secreted. It localises to the host Golgi apparatus membrane. Functionally, factor of infectivity and pathogenicity, required for optimal virus replication. Alters numerous pathways of T-lymphocyte function and down-regulates immunity surface molecules in order to evade host defense and increase viral infectivity. Alters the functionality of other immunity cells, like dendritic cells, monocytes/macrophages and NK cells. In terms of biological role, in infected CD4(+) T-lymphocytes, down-regulates the surface MHC-I, mature MHC-II, CD4, CD28, CCR5 and CXCR4 molecules. Mediates internalization and degradation of host CD4 through the interaction of with the cytoplasmic tail of CD4, the recruitment of AP-2 (clathrin adapter protein complex 2), internalization through clathrin coated pits, and subsequent transport to endosomes and lysosomes for degradation. Diverts host MHC-I molecules to the trans-Golgi network-associated endosomal compartments by an endocytic pathway to finally target them for degradation. MHC-I down-regulation may involve AP-1 (clathrin adapter protein complex 1) or possibly Src family kinase-ZAP70/Syk-PI3K cascade recruited by PACS2. In consequence infected cells are masked for immune recognition by cytotoxic T-lymphocytes. Decreasing the number of immune receptors also prevents reinfection by more HIV particles (superinfection). Down-regulates host SERINC3 and SERINC5 thereby excluding these proteins from the viral particles. Virion infectivity is drastically higher when SERINC3 or SERINC5 are excluded from the viral envelope, because these host antiviral proteins impair the membrane fusion event necessary for subsequent virion penetration. Its function is as follows. Bypasses host T-cell signaling by inducing a transcriptional program nearly identical to that of anti-CD3 cell activation. Interaction with TCR-zeta chain up-regulates the Fas ligand (FasL). Increasing surface FasL molecules and decreasing surface MHC-I molecules on infected CD4(+) cells send attacking cytotoxic CD8+ T-lymphocytes into apoptosis. Plays a role in optimizing the host cell environment for viral replication without causing cell death by apoptosis. Protects the infected cells from apoptosis in order to keep them alive until the next virus generation is ready to strike. Inhibits the Fas and TNFR-mediated death signals by blocking MAP3K5/ASK1. Decreases the half-life of TP53, protecting the infected cell against p53-mediated apoptosis. Inhibits the apoptotic signals regulated by the Bcl-2 family proteins through the formation of a Nef/PI3-kinase/PAK2 complex that leads to activation of PAK2 and induces phosphorylation of host BAD. Functionally, extracellular Nef protein targets CD4(+) T-lymphocytes for apoptosis by interacting with CXCR4 surface receptors. The protein is Protein Nef of Homo sapiens (Human).